The sequence spans 152 residues: Ribosome maturation factor RimP (152 aa).

It belongs to the RimP family.

The protein resides in the cytoplasm. Functionally, required for maturation of 30S ribosomal subunits. The sequence is that of Ribosome maturation factor RimP from Burkholderia vietnamiensis (strain G4 / LMG 22486) (Burkholderia cepacia (strain R1808)).